Consider the following 117-residue polypeptide: MAGFPLLLTLLTHCAGSWAQSVLTQPPSASGTPGQRVTISCSGSSSNIGSNYVYWYQQLPGTAPKLLIYSNNQRPSGVPDRFSGSKSGTSASLAISGLRSEDEADYYCAAWDDSLSG.

The first 19 residues, 1–19, serve as a signal peptide directing secretion; it reads MAGFPLLLTLLTHCAGSWA. Pyrrolidone carboxylic acid is present on Gln-20. Residues 20-44 are framework-1; the sequence is QSVLTQPPSASGTPGQRVTISCSGS. An Ig-like domain is found at 20 to 117; it reads QSVLTQPPSA…CAAWDDSLSG (98 aa). Cys-41 and Cys-108 are joined by a disulfide. Positions 45–52 are complementarity-determining-1; sequence SSNIGSNY. Positions 53–69 are framework-2; the sequence is VYWYQQLPGTAPKLLIY. The complementarity-determining-2 stretch occupies residues 70–72; sequence SNN. Residues 73–108 form a framework-3 region; that stretch reads QRPSGVPDRFSGSKSGTSASLAISGLRSEDEADYYC. Positions 109–117 are complementarity-determining-3; the sequence is AAWDDSLSG.

As to quaternary structure, immunoglobulins are composed of two identical heavy chains and two identical light chains; disulfide-linked.

It localises to the secreted. The protein localises to the cell membrane. V region of the variable domain of immunoglobulin light chains that participates in the antigen recognition. Immunoglobulins, also known as antibodies, are membrane-bound or secreted glycoproteins produced by B lymphocytes. In the recognition phase of humoral immunity, the membrane-bound immunoglobulins serve as receptors which, upon binding of a specific antigen, trigger the clonal expansion and differentiation of B lymphocytes into immunoglobulins-secreting plasma cells. Secreted immunoglobulins mediate the effector phase of humoral immunity, which results in the elimination of bound antigens. The antigen binding site is formed by the variable domain of one heavy chain, together with that of its associated light chain. Thus, each immunoglobulin has two antigen binding sites with remarkable affinity for a particular antigen. The variable domains are assembled by a process called V-(D)-J rearrangement and can then be subjected to somatic hypermutations which, after exposure to antigen and selection, allow affinity maturation for a particular antigen. The protein is Immunoglobulin lambda variable 1-47 of Homo sapiens (Human).